The sequence spans 482 residues: Immune evasion protein OPG047 (482 aa).

Residues Lys20–Ser90 form the BTB domain. The BACK domain occupies Cys125–His222. Kelch repeat units lie at residues Val273–Asn319, Lys320–Asn363, Ile365–Arg408, Leu410–Asn447, and Lys448–Trp482.

This sequence belongs to the orthopoxvirus OPG047 family.

Its function is as follows. Might have a role in the suppression of host immune response. In Cynomys gunnisoni (Gunnison's prairie dog), this protein is Immune evasion protein OPG047 (OPG047).